Reading from the N-terminus, the 539-residue chain is M protein, serotype 24 (539 aa).

Residues 1-42 (MTKNNTNRHYSLRKLKTGTASVAVALTVLGAGLVVNTNEVSA) form the signal peptide. An A-1 repeat occupies 118 to 152 (LEARKADLEKALEGAMNFSTADSAKIKTLEAEKAA). The tract at residues 118-301 (LEARKADLEK…ALEAEKADLE (184 aa)) is 5.3 X 35 AA tandem repeats, A-type. Residues 153-187 (LAARKADLEKALEGAMNFSTADSAKIKTLEAEKAA) form an A-2 repeat. The A-3 repeat unit spans residues 188-222 (LEARQAELEKALEGAMNFSTADSAKIKTLEAEKAA). An A-4 repeat occupies 223 to 257 (LAARKADLEKALEGAMNFSTADSAKIKTLEAEKAA). One copy of the A-5 repeat lies at 258–292 (LEARQAELEKALEGAMNFSTADSAKIKTLEAEKAA). One copy of the A-6; truncated repeat lies at 293 to 297 (LEAEK). Residues 297-401 (KADLEHQSQV…REAKKQVEKA (105 aa)) are disordered. C repeat units follow at residues 298–332 (ADLE…EAEH), 333–367 (QKLE…EAEH), and 368–402 (QKLE…EKAL). Residues 303-312 (QSQVLNANRQ) are compositionally biased toward polar residues. Composition is skewed to basic and acidic residues over residues 314–340 (LRRD…EQNK), 349–375 (LRRD…EQNK), and 384–401 (LRRD…VEKA). D repeat units lie at residues 435 to 440 (AKLEAE), 441 to 446 (AKALKE), 449 to 454 (AKQAEE), and 456 to 461 (AKLRAG). A disordered region spans residues 456–511 (AKLRAGKASDSQTPDAKPGNKAVPGKGQAPQAGTKPNQNKAPMKETKRQLPSTGET). The LPXTG sorting signal signature appears at 505-509 (LPSTG). Residue Thr508 is modified to Pentaglycyl murein peptidoglycan amidated threonine. A propeptide spans 509-539 (GETANPFFTAAALTVMATAGVAAVVKRKEEN) (removed by sortase).

This sequence belongs to the M protein family.

The protein localises to the secreted. It is found in the cell wall. Functionally, this protein is one of the different antigenic serotypes of protein M. Protein M is closely associated with virulence of the bacterium and can render the organism resistant to phagocytosis. The chain is M protein, serotype 24 (emm24) from Streptococcus pyogenes.